The sequence spans 435 residues: Glycine reductase complex component B subunit gamma (435 aa).

U350 is a catalytic residue. A non-standard amino acid (selenocysteine) is located at residue U350.

Belongs to the GrdB/GrdF/GrdH family. Heterohexamer of two alpha, two beta and two gamma subunits. Component of the glycine reductase complex, together with components A and C. PB is substrate specific.

The enzyme catalyses acetyl phosphate + [thioredoxin]-disulfide + NH4(+) + H2O = [thioredoxin]-dithiol + glycine + phosphate + H(+). In the first step of glycine reductase, the substrate is bound to component PB via a Schiff base intermediate. Then the PB-activated substrate is nucleophilically attacked by the selenol anion of component PA to transform it to a carboxymethylated selenoether and the respective amine. By action of component PC, acetyl phosphate is formed, leaving component PA in its oxidized state. Finally component PA becomes reduced by the thioredoxin system to start a new catalytic cycle of reductive deamination. This Carboxydothermus hydrogenoformans (strain ATCC BAA-161 / DSM 6008 / Z-2901) protein is Glycine reductase complex component B subunit gamma (grdB).